A 297-amino-acid polypeptide reads, in one-letter code: Protoheme IX farnesyltransferase (297 aa).

Transmembrane regions (helical) follow at residues 23-43, 49-69, 90-110, 117-137, 144-164, 171-191, 215-235, 238-258, and 277-297; these read VTQL…PGLP, VFGT…NCLI, ISAA…MLVL, LTMW…TVIL, NIVI…AAVA, AWVL…ALAL, RLHI…PYII, SGLL…AYAW, and ILYL…GLLA.

Belongs to the UbiA prenyltransferase family. Protoheme IX farnesyltransferase subfamily.

Its subcellular location is the cell inner membrane. The enzyme catalyses heme b + (2E,6E)-farnesyl diphosphate + H2O = Fe(II)-heme o + diphosphate. Its pathway is porphyrin-containing compound metabolism; heme O biosynthesis; heme O from protoheme: step 1/1. Converts heme B (protoheme IX) to heme O by substitution of the vinyl group on carbon 2 of heme B porphyrin ring with a hydroxyethyl farnesyl side group. In Bordetella petrii (strain ATCC BAA-461 / DSM 12804 / CCUG 43448), this protein is Protoheme IX farnesyltransferase.